A 464-amino-acid polypeptide reads, in one-letter code: Ribulose bisphosphate carboxylase/oxygenase activase A, chloroplastic (464 aa).

The transit peptide at 1–48 (MAAAFSSTVGAPASTPTNFLGKKLKKQVTSAVNYHGKSSKANRFTVMA) directs the protein to the chloroplast. Residue 155–162 (GGKGQGKS) coordinates ATP.

This sequence belongs to the RuBisCO activase family.

The protein resides in the plastid. It localises to the chloroplast stroma. In terms of biological role, activation of RuBisCO (ribulose-1,5-bisphosphate carboxylase/oxygenase; EC 4.1.1.39) involves the ATP-dependent carboxylation of the epsilon-amino group of lysine leading to a carbamate structure. The polypeptide is Ribulose bisphosphate carboxylase/oxygenase activase A, chloroplastic (RCAA) (Hordeum vulgare (Barley)).